An 83-amino-acid chain; its full sequence is UPF0248 protein TGAM_1209 (83 aa).

It belongs to the UPF0248 family.

The protein is UPF0248 protein TGAM_1209 of Thermococcus gammatolerans (strain DSM 15229 / JCM 11827 / EJ3).